A 42-amino-acid polypeptide reads, in one-letter code: Conotoxin Au11.6 (42 aa).

Intrachain disulfides connect Cys6-Cys20, Cys13-Cys25, Cys19-Cys30, and Cys24-Cys37.

The protein belongs to the conotoxin I1 superfamily. In terms of tissue distribution, expressed by the venom duct.

It is found in the secreted. The protein is Conotoxin Au11.6 of Conus aulicus (Princely cone).